Here is a 476-residue protein sequence, read N- to C-terminus: Light-independent protochlorophyllide reductase subunit N (476 aa).

[4Fe-4S] cluster-binding residues include Cys31, Cys56, and Cys116.

This sequence belongs to the BchN/ChlN family. Protochlorophyllide reductase is composed of three subunits; ChlL, ChlN and ChlB. Forms a heterotetramer of two ChlB and two ChlN subunits. [4Fe-4S] cluster serves as cofactor.

Its subcellular location is the plastid. The protein localises to the chloroplast. It catalyses the reaction chlorophyllide a + oxidized 2[4Fe-4S]-[ferredoxin] + 2 ADP + 2 phosphate = protochlorophyllide a + reduced 2[4Fe-4S]-[ferredoxin] + 2 ATP + 2 H2O. It participates in porphyrin-containing compound metabolism; chlorophyll biosynthesis (light-independent). Functionally, component of the dark-operative protochlorophyllide reductase (DPOR) that uses Mg-ATP and reduced ferredoxin to reduce ring D of protochlorophyllide (Pchlide) to form chlorophyllide a (Chlide). This reaction is light-independent. The NB-protein (ChlN-ChlB) is the catalytic component of the complex. The protein is Light-independent protochlorophyllide reductase subunit N of Staurastrum punctulatum (Green alga).